We begin with the raw amino-acid sequence, 252 residues long: tRNA (guanine-N(1)-)-methyltransferase (252 aa).

Residues glycine 118 and 138 to 143 each bind S-adenosyl-L-methionine; that span reads IGDYVL.

The protein belongs to the RNA methyltransferase TrmD family. Homodimer.

The protein localises to the cytoplasm. The enzyme catalyses guanosine(37) in tRNA + S-adenosyl-L-methionine = N(1)-methylguanosine(37) in tRNA + S-adenosyl-L-homocysteine + H(+). In terms of biological role, specifically methylates guanosine-37 in various tRNAs. The polypeptide is tRNA (guanine-N(1)-)-methyltransferase (Pseudomonas paraeruginosa (strain DSM 24068 / PA7) (Pseudomonas aeruginosa (strain PA7))).